The primary structure comprises 127 residues: Large ribosomal subunit protein bL17 (127 aa).

It belongs to the bacterial ribosomal protein bL17 family. Part of the 50S ribosomal subunit. Contacts protein L32.

This Legionella pneumophila (strain Lens) protein is Large ribosomal subunit protein bL17.